We begin with the raw amino-acid sequence, 125 residues long: Ribosome-binding factor A (125 aa).

This sequence belongs to the RbfA family. As to quaternary structure, monomer. Binds 30S ribosomal subunits, but not 50S ribosomal subunits or 70S ribosomes.

The protein localises to the cytoplasm. Its function is as follows. One of several proteins that assist in the late maturation steps of the functional core of the 30S ribosomal subunit. Associates with free 30S ribosomal subunits (but not with 30S subunits that are part of 70S ribosomes or polysomes). Required for efficient processing of 16S rRNA. May interact with the 5'-terminal helix region of 16S rRNA. The polypeptide is Ribosome-binding factor A (Methylobacillus flagellatus (strain ATCC 51484 / DSM 6875 / VKM B-1610 / KT)).